The chain runs to 602 residues: DNA mismatch repair protein MutL (602 aa).

This sequence belongs to the DNA mismatch repair MutL/HexB family.

Functionally, this protein is involved in the repair of mismatches in DNA. It is required for dam-dependent methyl-directed DNA mismatch repair. May act as a 'molecular matchmaker', a protein that promotes the formation of a stable complex between two or more DNA-binding proteins in an ATP-dependent manner without itself being part of a final effector complex. The polypeptide is DNA mismatch repair protein MutL (Baumannia cicadellinicola subsp. Homalodisca coagulata).